A 98-amino-acid polypeptide reads, in one-letter code: Large ribosomal subunit protein uL23 (98 aa).

This sequence belongs to the universal ribosomal protein uL23 family. In terms of assembly, part of the 50S ribosomal subunit. Contacts protein L29, and trigger factor when it is bound to the ribosome.

In terms of biological role, one of the early assembly proteins it binds 23S rRNA. One of the proteins that surrounds the polypeptide exit tunnel on the outside of the ribosome. Forms the main docking site for trigger factor binding to the ribosome. This is Large ribosomal subunit protein uL23 from Chromohalobacter salexigens (strain ATCC BAA-138 / DSM 3043 / CIP 106854 / NCIMB 13768 / 1H11).